The sequence spans 153 residues: Endoribonuclease YbeY (153 aa).

3 residues coordinate Zn(2+): histidine 114, histidine 118, and histidine 124.

Belongs to the endoribonuclease YbeY family. Requires Zn(2+) as cofactor.

The protein resides in the cytoplasm. Its function is as follows. Single strand-specific metallo-endoribonuclease involved in late-stage 70S ribosome quality control and in maturation of the 3' terminus of the 16S rRNA. This is Endoribonuclease YbeY from Shewanella sp. (strain MR-4).